The sequence spans 591 residues: Metalloendopeptidase OPG085 (591 aa).

Histidine 41 serves as a coordination point for Zn(2+). Residue glutamate 44 is part of the active site. Histidine 45 is a Zn(2+) binding site.

It belongs to the peptidase M44 family. Zn(2+) serves as cofactor. Post-translationally, undergoes proteolytic processing during the course of infection. May be cleaved into 46 kDa and 22 kDa products (Potential).

The protein localises to the virion. Its function is as follows. Probably involved in maturation of some viral proteins by processing them preferentially at Ala-Gly-|-Ser/Thr/Lys motifs. Does not seem to be responsible for the cleavage of major core proteins. The chain is Metalloendopeptidase OPG085 (OPG085) from Homo sapiens (Human).